The primary structure comprises 348 residues: D-alanine--D-alanine ligase (348 aa).

Residues 132–334 form the ATP-grasp domain; it reads KRILEVAGVP…YSDLIKELVV (203 aa). 162-217 lines the ATP pocket; that stretch reads LEKLTFPVFVKPANMGSSVGISKAENESELRSAIDLALKYDSRILIEQGVVAREIE. 3 residues coordinate Mg(2+): Asp288, Glu301, and Asn303.

Belongs to the D-alanine--D-alanine ligase family. Mg(2+) is required as a cofactor. Mn(2+) serves as cofactor.

It is found in the cytoplasm. The catalysed reaction is 2 D-alanine + ATP = D-alanyl-D-alanine + ADP + phosphate + H(+). The protein operates within cell wall biogenesis; peptidoglycan biosynthesis. In terms of biological role, cell wall formation. This Streptococcus thermophilus (strain ATCC BAA-491 / LMD-9) protein is D-alanine--D-alanine ligase.